The sequence spans 782 residues: Formin-like protein 9 (782 aa).

The N-terminal stretch at Met1 to Ala24 is a signal peptide. Residues Leu102–Phe122 form a helical membrane-spanning segment. Disordered regions lie at residues Asp191–Glu223, Met264–Val287, and Ser387–Val407. Positions Glu214–Glu223 are enriched in acidic residues. The span at Ala396–Val407 shows a compositional bias: pro residues. The FH2 domain occupies Leu406–Asp782.

It belongs to the formin-like family. Class-I subfamily.

The protein resides in the membrane. Functionally, might be involved in the organization and polarity of the actin cytoskeleton. The protein is Formin-like protein 9 (FH9) of Arabidopsis thaliana (Mouse-ear cress).